Here is a 364-residue protein sequence, read N- to C-terminus: Heavy metal-associated isoprenylated plant protein 35 (364 aa).

The segment covering 1–12 has biased composition (basic and acidic residues); it reads MATDEMKSETKK. Positions 1–33 are disordered; it reads MATDEMKSETKKTEHKQKQSTQIKQDLPPPTIP. An HMA domain is found at 39-102; it reads YKSCTLKVSI…KLNKAGKNAE (64 aa). A metal cation-binding residues include Cys-50 and Cys-53. The disordered stretch occupies residues 101 to 265; sequence AEQLPEIPDP…PPTATDYDRP (165 aa). The span at 111-122 shows a compositional bias: basic and acidic residues; the sequence is VDNKPKPVDPKE. Polar residues predominate over residues 134–144; sequence QITNEATSSGI. Basic and acidic residues-rich tracts occupy residues 154–169 and 180–198; these read ECDK…EKCL and VKEE…KEES. Residues 237 to 253 show a composition bias toward polar residues; that stretch reads SLATTNNPTDGPARTQS. Residue Cys-361 is modified to Cysteine methyl ester. Cys-361 carries S-farnesyl cysteine lipidation. Residues 362–364 constitute a propeptide, removed in mature form; that stretch reads AIM.

Belongs to the HIPP family.

Heavy-metal-binding protein. This chain is Heavy metal-associated isoprenylated plant protein 35, found in Arabidopsis thaliana (Mouse-ear cress).